Here is a 329-residue protein sequence, read N- to C-terminus: GMP reductase (329 aa).

C178 (thioimidate intermediate) is an active-site residue. 207 to 230 (IIADGGIRNNGDIAKSIRFGATMC) is an NADP(+) binding site.

It belongs to the IMPDH/GMPR family. GuaC type 2 subfamily.

It catalyses the reaction IMP + NH4(+) + NADP(+) = GMP + NADPH + 2 H(+). Functionally, catalyzes the irreversible NADPH-dependent deamination of GMP to IMP. It functions in the conversion of nucleobase, nucleoside and nucleotide derivatives of G to A nucleotides, and in maintaining the intracellular balance of A and G nucleotides. The polypeptide is GMP reductase (Lacticaseibacillus paracasei (strain ATCC 334 / BCRC 17002 / CCUG 31169 / CIP 107868 / KCTC 3260 / NRRL B-441) (Lactobacillus paracasei)).